Reading from the N-terminus, the 199-residue chain is Segregation and condensation protein B (199 aa).

It belongs to the ScpB family. In terms of assembly, homodimer. Homodimerization may be required to stabilize the binding of ScpA to the Smc head domains. Component of a cohesin-like complex composed of ScpA, ScpB and the Smc homodimer, in which ScpA and ScpB bind to the head domain of Smc. The presence of the three proteins is required for the association of the complex with DNA.

Its subcellular location is the cytoplasm. Participates in chromosomal partition during cell division. May act via the formation of a condensin-like complex containing Smc and ScpA that pull DNA away from mid-cell into both cell halves. This is Segregation and condensation protein B from Leuconostoc mesenteroides subsp. mesenteroides (strain ATCC 8293 / DSM 20343 / BCRC 11652 / CCM 1803 / JCM 6124 / NCDO 523 / NBRC 100496 / NCIMB 8023 / NCTC 12954 / NRRL B-1118 / 37Y).